The primary structure comprises 387 residues: GTPase Obg (387 aa).

The Obg domain occupies 1 to 159 (MKFLDEAKIY…MWVRLEMKLL (159 aa)). The 175-residue stretch at 160-334 (ADVGLVGMPN…LVYHVGGMVK (175 aa)) folds into the OBG-type G domain. GTP contacts are provided by residues 166–173 (GMPNAGKS), 191–195 (FTTLQ), 213–216 (DIPG), 283–286 (SKAD), and 315–317 (SSA). 2 residues coordinate Mg(2+): S173 and T193. A disordered region spans residues 347–379 (LEDAPTRAGSKALRDEHAPSWQDDDDDDDDDDG). Residues 368 to 379 (QDDDDDDDDDDG) are compositionally biased toward acidic residues.

It belongs to the TRAFAC class OBG-HflX-like GTPase superfamily. OBG GTPase family. In terms of assembly, monomer. The cofactor is Mg(2+).

It localises to the cytoplasm. Its function is as follows. An essential GTPase which binds GTP, GDP and possibly (p)ppGpp with moderate affinity, with high nucleotide exchange rates and a fairly low GTP hydrolysis rate. Plays a role in control of the cell cycle, stress response, ribosome biogenesis and in those bacteria that undergo differentiation, in morphogenesis control. The sequence is that of GTPase Obg from Magnetococcus marinus (strain ATCC BAA-1437 / JCM 17883 / MC-1).